Here is a 352-residue protein sequence, read N- to C-terminus: Deoxyhypusine synthase-like protein (352 aa).

This sequence belongs to the deoxyhypusine synthase family.

This chain is Deoxyhypusine synthase-like protein, found in Coxiella burnetii (strain Dugway 5J108-111).